Here is a 189-residue protein sequence, read N- to C-terminus: GMP synthase [glutamine-hydrolyzing] subunit A (189 aa).

Positions K5–Y189 constitute a Glutamine amidotransferase type-1 domain. Residue C79 is the Nucleophile of the active site. Catalysis depends on residues H166 and E168.

As to quaternary structure, heterodimer composed of a glutamine amidotransferase subunit (A) and a GMP-binding subunit (B).

It catalyses the reaction XMP + L-glutamine + ATP + H2O = GMP + L-glutamate + AMP + diphosphate + 2 H(+). It functions in the pathway purine metabolism; GMP biosynthesis; GMP from XMP (L-Gln route): step 1/1. In terms of biological role, catalyzes the synthesis of GMP from XMP. This Methanosarcina acetivorans (strain ATCC 35395 / DSM 2834 / JCM 12185 / C2A) protein is GMP synthase [glutamine-hydrolyzing] subunit A.